The primary structure comprises 885 residues: Probable LRR receptor-like serine/threonine-protein kinase At1g51820 (885 aa).

An N-terminal signal peptide occupies residues 1 to 20 (MERHFVFIATYLLIFHLVQA). Residues 21 to 509 (QNQTGFISVD…GHKKKSVIVP (489 aa)) are Extracellular-facing. Residues Asn-22, Asn-93, Asn-135, Asn-194, Asn-228, Asn-250, Asn-254, Asn-281, Asn-287, Asn-424, Asn-437, Asn-456, and Asn-461 are each glycosylated (N-linked (GlcNAc...) asparagine). 3 LRR repeats span residues 403-424 (IITSLDLSSSGLTGIITQAIKN), 427-447 (HLQILDLSDNNLTGEVPEFLA), and 451-473 (SLLVINLSGNNLSGSVPPSLLQK). A helical membrane pass occupies residues 510–530 (VVASIASIAVLIGALVLFLIL). At 531-885 (RKKRSPKVEG…FGTEVSPNAR (355 aa)) the chain is on the cytoplasmic side. The 274-residue stretch at 578–851 (NNFQRILGKG…QVVIELNECL (274 aa)) folds into the Protein kinase domain. Residues 584–592 (LGKGGFGMV) and Lys-606 each bind ATP. At Tyr-651 the chain carries Phosphotyrosine. Asp-703 functions as the Proton acceptor in the catalytic mechanism. At Ser-737 the chain carries Phosphoserine. Phosphothreonine occurs at positions 738 and 743. A Phosphotyrosine modification is found at Tyr-751.

It belongs to the protein kinase superfamily. Ser/Thr protein kinase family.

It is found in the membrane. It catalyses the reaction L-seryl-[protein] + ATP = O-phospho-L-seryl-[protein] + ADP + H(+). It carries out the reaction L-threonyl-[protein] + ATP = O-phospho-L-threonyl-[protein] + ADP + H(+). The protein is Probable LRR receptor-like serine/threonine-protein kinase At1g51820 of Arabidopsis thaliana (Mouse-ear cress).